A 348-amino-acid chain; its full sequence is Large ribosomal subunit protein uL3m (348 aa).

The N-terminal 40 residues, 1 to 40 (MPGWRLLAWAGARVLDRGTGGLGTALGSGNRTDICVLVRS), are a transit peptide targeting the mitochondrion.

Belongs to the universal ribosomal protein uL3 family. Component of the mitochondrial ribosome large subunit (39S) which comprises a 16S rRNA and about 50 distinct proteins.

It localises to the mitochondrion. This Bos taurus (Bovine) protein is Large ribosomal subunit protein uL3m (MRPL3).